The chain runs to 31 residues: Cyclotide hyen-J (31 aa).

Residues 1–31 (GSVPCGESCVWIPCITSIAGCSCSNKVCYMD) constitute a cross-link (cyclopeptide (Gly-Asp)). Disulfide bonds link Cys5-Cys21, Cys9-Cys23, and Cys14-Cys28.

This is a cyclic peptide. As to expression, detected in seeds (at protein level).

Functionally, probably participates in a plant defense mechanism. The protein is Cyclotide hyen-J of Pigea enneasperma (Spade flower).